Here is a 147-residue protein sequence, read N- to C-terminus: Lysozyme C (147 aa).

Positions 1 to 18 (MRSLLVLVLCFLPLAALG) are cleaved as a signal peptide. The region spanning 19 to 147 (KVYGRCELAA…VNAWIRGCRL (129 aa)) is the C-type lysozyme domain. 4 disulfide bridges follow: Cys24-Cys145, Cys48-Cys133, Cys82-Cys98, and Cys94-Cys112. Catalysis depends on residues Glu53 and Asp70.

It belongs to the glycosyl hydrolase 22 family. In terms of assembly, monomer.

The protein resides in the secreted. It catalyses the reaction Hydrolysis of (1-&gt;4)-beta-linkages between N-acetylmuramic acid and N-acetyl-D-glucosamine residues in a peptidoglycan and between N-acetyl-D-glucosamine residues in chitodextrins.. Lysozymes have primarily a bacteriolytic function; those in tissues and body fluids are associated with the monocyte-macrophage system and enhance the activity of immunoagents. The chain is Lysozyme C (LYZ) from Coturnix japonica (Japanese quail).